The primary structure comprises 130 residues: C-type natriuretic peptide 2 (130 aa).

Positions 1 to 22 (MAASSSSFVPLVLLFLAIPVEP) are cleaved as a signal peptide. Residues 23 to 103 (RPSMTRDEAQ…LQQQSKTTRR (81 aa)) constitute a propeptide that is removed on maturation. A disordered region spans residues 57–77 (ELLPRRPGPPRSFGASPGALR). A disulfide bond links Cys-114 and Cys-130.

The protein belongs to the natriuretic peptide family.

The protein resides in the secreted. Its function is as follows. Exhibits natriuretic and vasodepressant activity. Has cGMP-stimulating activity. May help to regulate body fluid homeostasis in a variety of aquatic environments. In Takifugu rubripes (Japanese pufferfish), this protein is C-type natriuretic peptide 2.